The primary structure comprises 282 residues: Bis(5'-nucleosyl)-tetraphosphatase, symmetrical (282 aa).

Belongs to the Ap4A hydrolase family.

It catalyses the reaction P(1),P(4)-bis(5'-adenosyl) tetraphosphate + H2O = 2 ADP + 2 H(+). In terms of biological role, hydrolyzes diadenosine 5',5'''-P1,P4-tetraphosphate to yield ADP. This chain is Bis(5'-nucleosyl)-tetraphosphatase, symmetrical, found in Salmonella paratyphi C (strain RKS4594).